Reading from the N-terminus, the 440-residue chain is Protein disulfide-isomerase A6 homolog (440 aa).

Positions 1-18 are cleaved as a signal peptide; that stretch reads MALIKLLLASLAITSVCG. Thioredoxin domains follow at residues 19-131 and 127-273; these read MYSK…AEAK and LAEA…ARAQ. Catalysis depends on nucleophile residues cysteine 54 and cysteine 57. Cysteines 54 and 57 form a disulfide. Positions 138-164 are disordered; that stretch reads LGGKSSGSSSSGSGSGSGKRGGGGSGN. Positions 139-149 are enriched in low complexity; that stretch reads GGKSSGSSSSG. The span at 150–163 shows a compositional bias: gly residues; sequence SGSGSGKRGGGGSG. Active-site nucleophile residues include cysteine 194 and cysteine 197. The cysteines at positions 194 and 197 are disulfide-linked. A disordered region spans residues 404-426; that stretch reads DGFPKIQKTEKWDGKDGALPAED. Positions 410–419 are enriched in basic and acidic residues; that stretch reads QKTEKWDGKD. The short motif at 437 to 440 is the Prevents secretion from ER element; it reads KTEL.

It belongs to the protein disulfide isomerase family.

The protein localises to the endoplasmic reticulum lumen. It carries out the reaction Catalyzes the rearrangement of -S-S- bonds in proteins.. Its function is as follows. May function as a chaperone that inhibits aggregation of misfolded proteins. May negatively regulate the unfolded protein response (UPR) through binding to UPR sensors. The polypeptide is Protein disulfide-isomerase A6 homolog (Caenorhabditis elegans).